The primary structure comprises 88 residues: Protein transport protein Sec61 subunit beta (88 aa).

The tract at residues 1–41 (MDSSVPGGQRTLQKRRNAQLQKEKKANQTPASPRQAGFGGS) is disordered. Residues 1 to 60 (MDSSVPGGQRTLQKRRNAQLQKEKKANQTPASPRQAGFGGSSSSILKLYTDEANGLRVDP) lie on the Cytoplasmic side of the membrane. The chain crosses the membrane as a helical span at residues 61–81 (LVVLFLAVAFVFSVVALHVVA).

Belongs to the SEC61-beta family. In terms of assembly, heterotrimeric complex composed of SEC61, SEB1 and SSS1.

It localises to the endoplasmic reticulum membrane. Necessary for protein translocation in the endoplasmic reticulum. The sequence is that of Protein transport protein Sec61 subunit beta (SBH1) from Kluyveromyces lactis (strain ATCC 8585 / CBS 2359 / DSM 70799 / NBRC 1267 / NRRL Y-1140 / WM37) (Yeast).